The sequence spans 63 residues: uncharacterized protein (63 aa).

The chain crosses the membrane as a helical span at residues 15 to 37; sequence ISHCHLPLSPATAIAIIICFRIV.

The protein localises to the membrane. This is an uncharacterized protein from Saccharomyces cerevisiae (strain ATCC 204508 / S288c) (Baker's yeast).